The primary structure comprises 226 residues: Imidazoleglycerol-phosphate dehydratase (226 aa).

Residues 23–55 (LTGGPIERPQPSLFASEKGANTAGPDDASQTTA) form a disordered region.

The protein belongs to the imidazoleglycerol-phosphate dehydratase family.

The catalysed reaction is D-erythro-1-(imidazol-4-yl)glycerol 3-phosphate = 3-(imidazol-4-yl)-2-oxopropyl phosphate + H2O. It participates in amino-acid biosynthesis; L-histidine biosynthesis; L-histidine from 5-phospho-alpha-D-ribose 1-diphosphate: step 6/9. The polypeptide is Imidazoleglycerol-phosphate dehydratase (HIS3) (Maudiozyma humilis (Sour dough yeast)).